A 315-amino-acid polypeptide reads, in one-letter code: uncharacterized protein (315 aa).

2 coiled-coil regions span residues 184–212 and 238–275; these read AGEE…TPEQ and EEHR…YKEK.

It belongs to the IIV-6 287R family.

This is an uncharacterized protein from Acheta domesticus (House cricket).